The primary structure comprises 37 residues: Large ribosomal subunit protein bL36 (37 aa).

The protein belongs to the bacterial ribosomal protein bL36 family.

The chain is Large ribosomal subunit protein bL36 from Desulforudis audaxviator (strain MP104C).